A 571-amino-acid polypeptide reads, in one-letter code: Potassium-transporting ATPase potassium-binding subunit (571 aa).

11 consecutive transmembrane segments (helical) span residues 3–23 (LIGW…VKPL), 64–84 (LGYG…LYAI), 135–155 (LGLT…AVAL), 179–199 (LYVL…QGMP), 254–274 (LANL…TNVF), 284–304 (GWAI…VTYA), 330–350 (FGIV…CGAV), 357–376 (FTAL…EIIV), 421–441 (MLAI…ATVL), 488–508 (LALG…AIAG), and 527–547 (GGLF…LTFF).

It belongs to the KdpA family. In terms of assembly, the system is composed of three essential subunits: KdpA, KdpB and KdpC.

Its subcellular location is the cell inner membrane. Its function is as follows. Part of the high-affinity ATP-driven potassium transport (or Kdp) system, which catalyzes the hydrolysis of ATP coupled with the electrogenic transport of potassium into the cytoplasm. This subunit binds the periplasmic potassium ions and delivers the ions to the membrane domain of KdpB through an intramembrane tunnel. This is Potassium-transporting ATPase potassium-binding subunit from Methylorubrum populi (strain ATCC BAA-705 / NCIMB 13946 / BJ001) (Methylobacterium populi).